Reading from the N-terminus, the 67-residue chain is ATP synthase F(0) complex subunit 8 (67 aa).

The helical transmembrane segment at 8–24 (TWLIMILSMILTLFITF) threads the bilayer. The residue at position 54 (Lys54) is an N6-acetyllysine; alternate. An N6-succinyllysine; alternate modification is found at Lys54. N6-acetyllysine is present on Lys57.

This sequence belongs to the ATPase protein 8 family. Component of the ATP synthase complex composed at least of ATP5F1A/subunit alpha, ATP5F1B/subunit beta, ATP5MC1/subunit c (homooctomer), MT-ATP6/subunit a, MT-ATP8/subunit 8, ATP5ME/subunit e, ATP5MF/subunit f, ATP5MG/subunit g, ATP5MK/subunit k, ATP5MJ/subunit j, ATP5F1C/subunit gamma, ATP5F1D/subunit delta, ATP5F1E/subunit epsilon, ATP5PF/subunit F6, ATP5PB/subunit b, ATP5PD/subunit d, ATP5PO/subunit OSCP. ATP synthase complex consists of a soluble F(1) head domain (subunits alpha(3) and beta(3)) - the catalytic core - and a membrane F(0) domain - the membrane proton channel (subunits c, a, 8, e, f, g, k and j). These two domains are linked by a central stalk (subunits gamma, delta, and epsilon) rotating inside the F1 region and a stationary peripheral stalk (subunits F6, b, d, and OSCP). Interacts with PRICKLE3.

Its subcellular location is the mitochondrion membrane. In terms of biological role, subunit 8, of the mitochondrial membrane ATP synthase complex (F(1)F(0) ATP synthase or Complex V) that produces ATP from ADP in the presence of a proton gradient across the membrane which is generated by electron transport complexes of the respiratory chain. ATP synthase complex consist of a soluble F(1) head domain - the catalytic core - and a membrane F(1) domain - the membrane proton channel. These two domains are linked by a central stalk rotating inside the F(1) region and a stationary peripheral stalk. During catalysis, ATP synthesis in the catalytic domain of F(1) is coupled via a rotary mechanism of the central stalk subunits to proton translocation. In vivo, can only synthesize ATP although its ATP hydrolase activity can be activated artificially in vitro. Part of the complex F(0) domain. The protein is ATP synthase F(0) complex subunit 8 of Phoca vitulina (Harbor seal).